We begin with the raw amino-acid sequence, 428 residues long: Forkhead box protein B2 (428 aa).

The fork-head DNA-binding region spans 12–103 (QKPPYSYISL…GDMFENGSFL (92 aa)). 2 disordered regions span residues 118 to 217 (HLHS…MQEA) and 408 to 428 (PTAAGRADSKGSSLHSVLVHS). Residues 136–163 (LHPHHPHHAHHHHHHHHHAAHHHHHHHP) show a composition bias toward basic residues. Composition is skewed to pro residues over residues 164–174 (PQPPPPPPPHM) and 183–192 (APAPQPPHLP). Low complexity predominate over residues 193-217 (SQPAQQPQPQSQPPQTSHPGKMQEA).

It localises to the nucleus. Transcription factor. This chain is Forkhead box protein B2 (Foxb2), found in Mus musculus (Mouse).